The chain runs to 225 residues: NAD(P)H-quinone oxidoreductase subunit K, chloroplastic (225 aa).

[4Fe-4S] cluster is bound by residues Cys43, Cys44, Cys108, and Cys139.

Belongs to the complex I 20 kDa subunit family. NDH is composed of at least 16 different subunits, 5 of which are encoded in the nucleus. Requires [4Fe-4S] cluster as cofactor.

It localises to the plastid. Its subcellular location is the chloroplast thylakoid membrane. It catalyses the reaction a plastoquinone + NADH + (n+1) H(+)(in) = a plastoquinol + NAD(+) + n H(+)(out). The enzyme catalyses a plastoquinone + NADPH + (n+1) H(+)(in) = a plastoquinol + NADP(+) + n H(+)(out). NDH shuttles electrons from NAD(P)H:plastoquinone, via FMN and iron-sulfur (Fe-S) centers, to quinones in the photosynthetic chain and possibly in a chloroplast respiratory chain. The immediate electron acceptor for the enzyme in this species is believed to be plastoquinone. Couples the redox reaction to proton translocation, and thus conserves the redox energy in a proton gradient. In Carica papaya (Papaya), this protein is NAD(P)H-quinone oxidoreductase subunit K, chloroplastic.